A 431-amino-acid chain; its full sequence is Putative transcription factor R429 (431 aa).

Residues 28–95 (NKFENMSKAL…SIENCSESLD (68 aa)) are a coiled coil. Residues 142-187 (SQQENSSESNNDIVKNGTGGSTSKRKKIQPSNRCSGSKTGKVTETK) form a disordered region. Low complexity predominate over residues 143 to 152 (QQENSSESNN). Over residues 170–181 (QPSNRCSGSKTG) the composition is skewed to polar residues. Residues 218 to 241 (CSVPDCDGEKILNQNDGYMVCKKC) fold into a zinc finger.

Belongs to the nucleo-cytoplasmic large DNA viruses (NCLDVs) VLTF-3 family.

Putative transcription factor. This chain is Putative transcription factor R429, found in Acanthamoeba polyphaga (Amoeba).